The chain runs to 51 residues: Putative antitoxin VapB6 (51 aa).

In terms of biological role, antitoxin component of a possible type II toxin-antitoxin (TA) system. The cognate toxin is VapC6. The sequence is that of Putative antitoxin VapB6 (vapB6) from Mycobacterium tuberculosis (strain CDC 1551 / Oshkosh).